We begin with the raw amino-acid sequence, 175 residues long: MALNIFQKQEVVEELAGVATKAHSLIVAEYAGITVSQMTAMRKQARESGVYLKVVKNKLAARALGDTEYAVIKEKLIGPLLYAFSLEDPGAAGRLIKEFSKKHDKLKSKTVSLGGVLYPAGHVDVLASLPTRLQALAMLARVLSEPVTLFARAIKAVADDKSETVAVSAPEASQA.

It belongs to the universal ribosomal protein uL10 family. As to quaternary structure, part of the ribosomal stalk of the 50S ribosomal subunit. The N-terminus interacts with L11 and the large rRNA to form the base of the stalk. The C-terminus forms an elongated spine to which L12 dimers bind in a sequential fashion forming a multimeric L10(L12)X complex.

In terms of biological role, forms part of the ribosomal stalk, playing a central role in the interaction of the ribosome with GTP-bound translation factors. This chain is Large ribosomal subunit protein uL10 (rplJ), found in Xylella fastidiosa (strain 9a5c).